A 141-amino-acid polypeptide reads, in one-letter code: Hydroperoxide reductase (141 aa).

Belongs to the OsmC/Ohr family. As to quaternary structure, homodimer.

It localises to the cytoplasm. In terms of biological role, reduces organic and inorganic peroxide substrates. Protects the cell against oxidative stress. This Mycoplasma genitalium (strain ATCC 33530 / DSM 19775 / NCTC 10195 / G37) (Mycoplasmoides genitalium) protein is Hydroperoxide reductase.